Reading from the N-terminus, the 413-residue chain is Serine hydroxymethyltransferase (413 aa).

Residues Leu-117 and Gly-121 to Leu-123 contribute to the (6S)-5,6,7,8-tetrahydrofolate site. N6-(pyridoxal phosphate)lysine is present on Lys-226. Residue Ser-349–Phe-351 participates in (6S)-5,6,7,8-tetrahydrofolate binding.

This sequence belongs to the SHMT family. As to quaternary structure, homodimer. Requires pyridoxal 5'-phosphate as cofactor.

Its subcellular location is the cytoplasm. It carries out the reaction (6R)-5,10-methylene-5,6,7,8-tetrahydrofolate + glycine + H2O = (6S)-5,6,7,8-tetrahydrofolate + L-serine. Its pathway is one-carbon metabolism; tetrahydrofolate interconversion. The protein operates within amino-acid biosynthesis; glycine biosynthesis; glycine from L-serine: step 1/1. In terms of biological role, catalyzes the reversible interconversion of serine and glycine with tetrahydrofolate (THF) serving as the one-carbon carrier. This reaction serves as the major source of one-carbon groups required for the biosynthesis of purines, thymidylate, methionine, and other important biomolecules. Also exhibits THF-independent aldolase activity toward beta-hydroxyamino acids, producing glycine and aldehydes, via a retro-aldol mechanism. This chain is Serine hydroxymethyltransferase, found in Pelobacter propionicus (strain DSM 2379 / NBRC 103807 / OttBd1).